Reading from the N-terminus, the 486-residue chain is MKSLDDLDFDNRFARLGGAFSTEVLPDPIAEPRLVVASPAALALLDLPAETSDEALFAELFGGHKLWSEAEPRAMVYSGHQFGSYNPRLGDGRGLLLGEVINQAGEHWDLHLKGAGQTPYSRMGDGRAVLRSSIREFLASEALPALGIPSSRALCVIGSSTPVWREKKESAATLLRLAPSHVRFGHFEYFYYTRQHDQLKQLAAFVLEHHFADCNAAERPYAAMFRQVVERNAELIARWQAYGFCHGVMNTDNMSILGITFDYGPYAFLDDFDANHICNHSDDAGRYSFSNQVPIAHWNLAALAQALTPLVEVDELRASLDLFLPLYQAHYLDLMRRRLGLGVAAENDHALVQELLQRMQGSAVDYSLFFRRLGEETPERALASLRDDFVDREAFDRWAEAYRRRVEEEGGDQESRRRRMHAVNPLYVLRNYLAQQAIEAAEQGDYTEVRLLHQVLSRPFEEQPGMERFTRRPPDWGRHLEISCSS.

The ATP site is built by G90, G92, R93, K113, D125, G126, R176, and R183. D252 functions as the Proton acceptor in the catalytic mechanism. Residues N253 and D262 each coordinate Mg(2+). D262 is a binding site for ATP.

Belongs to the SELO family. Requires Mg(2+) as cofactor. It depends on Mn(2+) as a cofactor.

It carries out the reaction L-seryl-[protein] + ATP = 3-O-(5'-adenylyl)-L-seryl-[protein] + diphosphate. It catalyses the reaction L-threonyl-[protein] + ATP = 3-O-(5'-adenylyl)-L-threonyl-[protein] + diphosphate. The enzyme catalyses L-tyrosyl-[protein] + ATP = O-(5'-adenylyl)-L-tyrosyl-[protein] + diphosphate. The catalysed reaction is L-histidyl-[protein] + UTP = N(tele)-(5'-uridylyl)-L-histidyl-[protein] + diphosphate. It carries out the reaction L-seryl-[protein] + UTP = O-(5'-uridylyl)-L-seryl-[protein] + diphosphate. It catalyses the reaction L-tyrosyl-[protein] + UTP = O-(5'-uridylyl)-L-tyrosyl-[protein] + diphosphate. Nucleotidyltransferase involved in the post-translational modification of proteins. It can catalyze the addition of adenosine monophosphate (AMP) or uridine monophosphate (UMP) to a protein, resulting in modifications known as AMPylation and UMPylation. In Pseudomonas aeruginosa (strain ATCC 15692 / DSM 22644 / CIP 104116 / JCM 14847 / LMG 12228 / 1C / PRS 101 / PAO1), this protein is Protein nucleotidyltransferase YdiU.